The chain runs to 322 residues: 4-hydroxythreonine-4-phosphate dehydrogenase (322 aa).

Thr-132 is a binding site for substrate. A divalent metal cation contacts are provided by His-160, His-205, and His-260. The substrate site is built by Lys-268, Asn-277, and Arg-286.

The protein belongs to the PdxA family. In terms of assembly, homodimer. Zn(2+) serves as cofactor. The cofactor is Mg(2+). Requires Co(2+) as cofactor.

The protein localises to the cytoplasm. The enzyme catalyses 4-(phosphooxy)-L-threonine + NAD(+) = 3-amino-2-oxopropyl phosphate + CO2 + NADH. It participates in cofactor biosynthesis; pyridoxine 5'-phosphate biosynthesis; pyridoxine 5'-phosphate from D-erythrose 4-phosphate: step 4/5. Functionally, catalyzes the NAD(P)-dependent oxidation of 4-(phosphooxy)-L-threonine (HTP) into 2-amino-3-oxo-4-(phosphooxy)butyric acid which spontaneously decarboxylates to form 3-amino-2-oxopropyl phosphate (AHAP). In Xanthomonas campestris pv. campestris (strain 8004), this protein is 4-hydroxythreonine-4-phosphate dehydrogenase.